The following is a 154-amino-acid chain: ORF3b protein (154 aa).

Positions 80–138 (LQTLVLKMLHSSSLTSLLKTHRMCKYTQSTALQELLIQQWIQFMMSRRRLLACLCKHKK) are mitochondrial targeting signal. The segment at 134 to 154 (CKHKKVSTNLCTHSFRKKQVR) is nucleolar targeting. Residues 135-153 (KHKKVSTNLCTHSFRKKQV) carry the Bipartite nuclear localization signal motif.

As to quaternary structure, interacts with host RUNX1 isoform b.

It is found in the host nucleus. The protein localises to the host nucleolus. It localises to the host mitochondrion. Functionally, induces host cell G0/G1 arrest and apoptosis. The polypeptide is ORF3b protein (Homo sapiens (Human)).